We begin with the raw amino-acid sequence, 343 residues long: Protein RecA (343 aa).

64 to 71 (GPESSGKT) is an ATP binding site.

This sequence belongs to the RecA family.

The protein resides in the cytoplasm. Functionally, can catalyze the hydrolysis of ATP in the presence of single-stranded DNA, the ATP-dependent uptake of single-stranded DNA by duplex DNA, and the ATP-dependent hybridization of homologous single-stranded DNAs. It interacts with LexA causing its activation and leading to its autocatalytic cleavage. The protein is Protein RecA of Bacillus mycoides (strain KBAB4) (Bacillus weihenstephanensis).